Consider the following 520-residue polypeptide: Cytochrome P450 4F8 (520 aa).

The helical transmembrane segment at Ala15–Trp37 threads the bilayer. Cys468 contacts heme.

It belongs to the cytochrome P450 family. Requires heme as cofactor. In terms of tissue distribution, expressed in the epithelium of seminal vesicles, in renal cortex, in adult and fetal liver, in epidermis, in corneal epithelium, in sweat glands, hair follicles, epithelial linings of the ampulla of vas deferens and of the stomach and small intestine, as well as in the transitional epithelium of the bladder and ureter (at protein level). In the epidermis, expressed from the basal cell to the granular cell layers. In the corneal epithelium, expressed in all cell layers. Also detected in prostate. Up-regulated in the epidermis of psoriatic lesions.

Its subcellular location is the endoplasmic reticulum membrane. The protein resides in the microsome membrane. The enzyme catalyses an organic molecule + reduced [NADPH--hemoprotein reductase] + O2 = an alcohol + oxidized [NADPH--hemoprotein reductase] + H2O + H(+). It catalyses the reaction (5Z,8Z,11Z,14Z)-eicosatetraenoate + reduced [NADPH--hemoprotein reductase] + O2 = (18R)-hydroxy-(5Z,8Z,11Z,14Z)-eicosatetraenoate + oxidized [NADPH--hemoprotein reductase] + H2O + H(+). It carries out the reaction (4Z,7Z,10Z,13Z,16Z)-docosapentaenoate + reduced [NADPH--hemoprotein reductase] + O2 = 20-hydroxy-(4Z,7Z,10Z,13Z,16Z)-docosapentaenoate + oxidized [NADPH--hemoprotein reductase] + H2O + H(+). The catalysed reaction is prostaglandin H1 + reduced [NADPH--hemoprotein reductase] + O2 = 19-hydroxyprostaglandin H1 + oxidized [NADPH--hemoprotein reductase] + H2O + H(+). The enzyme catalyses prostaglandin H2 + reduced [NADPH--hemoprotein reductase] + O2 = 19-hydroxyprostaglandin H2 + oxidized [NADPH--hemoprotein reductase] + H2O + H(+). It catalyses the reaction prostaglandin I2 + reduced [NADPH--hemoprotein reductase] + O2 = 19-hydroxy-prostaglandin I2 + oxidized [NADPH--hemoprotein reductase] + H2O + H(+). It carries out the reaction (4Z,7Z,10Z,13Z,16Z,19Z)-docosahexaenoate + reduced [NADPH--hemoprotein reductase] + O2 = 10,11-epoxy-(4Z,7Z,13Z,16Z,19Z)-docosapentaenoate + oxidized [NADPH--hemoprotein reductase] + H2O + H(+). The catalysed reaction is (4Z,7Z,10Z,13Z,16Z,19Z)-docosahexaenoate + reduced [NADPH--hemoprotein reductase] + O2 = 13,14-epoxy-(4Z,7Z,10Z,16Z,19Z)-docosapentaenoate + oxidized [NADPH--hemoprotein reductase] + H2O + H(+). The enzyme catalyses (4Z,7Z,10Z,13Z,16Z,19Z)-docosahexaenoate + reduced [NADPH--hemoprotein reductase] + O2 = 16,17-epoxy-(4Z,7Z,10Z,13Z,19Z)-docosapentaenoate + oxidized [NADPH--hemoprotein reductase] + H2O + H(+). It catalyses the reaction (4Z,7Z,10Z,13Z,16Z,19Z)-docosahexaenoate + reduced [NADPH--hemoprotein reductase] + O2 = 19,20-epoxy-(4Z,7Z,10Z,13Z,16Z)-docosapentaenoate + oxidized [NADPH--hemoprotein reductase] + H2O + H(+). It carries out the reaction (7Z,10Z,13Z,16Z,19Z)-docosapentaenoate + reduced [NADPH--hemoprotein reductase] + O2 = 10,11-epoxy-(7Z,13Z,16Z,19Z)-docosatetraenoate + oxidized [NADPH--hemoprotein reductase] + H2O + H(+). The catalysed reaction is (7Z,10Z,13Z,16Z,19Z)-docosapentaenoate + reduced [NADPH--hemoprotein reductase] + O2 = 13,14-epoxy-(7Z,10Z,16Z,19Z)-docosatetraenoate + oxidized [NADPH--hemoprotein reductase] + H2O + H(+). The enzyme catalyses (7Z,10Z,13Z,16Z,19Z)-docosapentaenoate + reduced [NADPH--hemoprotein reductase] + O2 = 16,17-epoxy-(7Z,10Z,13Z,19Z)-docosatetraenoate + oxidized [NADPH--hemoprotein reductase] + H2O + H(+). It catalyses the reaction (7Z,10Z,13Z,16Z,19Z)-docosapentaenoate + reduced [NADPH--hemoprotein reductase] + O2 = 19,20-epoxy-(7Z,10Z,13Z,16Z)-docosatetraenoate + oxidized [NADPH--hemoprotein reductase] + H2O + H(+). It functions in the pathway lipid metabolism; fatty acid metabolism. A cytochrome P450 monooxygenase involved in the metabolism of endogenous polyunsaturated fatty acids (PUFAs) and their oxygenated derivatives (oxylipins). Mechanistically, uses molecular oxygen inserting one oxygen atom into a substrate, and reducing the second into a water molecule, with two electrons provided by NADPH via cytochrome P450 reductase (CPR; NADPH-ferrihemoprotein reductase). Catalyzes the hydroxylation of carbon hydrogen bonds, with preference for omega-1 and omega-2 positions. Hydroxylates (5Z,8Z,11Z,14Z)-eicosatetraenoic acid (arachidonate) predominantly at omega-2 position to form (18R)-hydroxyeicosatetraenoic acid (18R-HETE). Exhibits omega-1 hydroxylase activity toward prostaglandin (PG) H1, PGH2 and PGI2. Catalyzes the epoxidation of double bonds of PUFAs, including docosahexaenoic and docosapentaenoic acids. Shows little activity against PGD2, PGE1, PGE2, PGF2alpha, and leukotriene B4. The sequence is that of Cytochrome P450 4F8 from Homo sapiens (Human).